Here is a 473-residue protein sequence, read N- to C-terminus: Phosphatidylserine synthase 1 (473 aa).

Ala2 carries the N-acetylalanine modification. Residues 2–35 (ASCVGSRTLSKDDVNYRMHFRMINEQQVEDITID) lie on the Cytoplasmic side of the membrane. Residues 36-56 (FFYRPHTITLLSFTIISLMYF) traverse the membrane as a helical segment. Residues 57–72 (AFTRDDSVPEDNIWRG) lie on the Lumenal side of the membrane. The chain crosses the membrane as a helical span at residues 73-93 (ILSVIFFFLIISVLAFPNGPF). Topologically, residues 94–102 (TRPHPALWR) are cytoplasmic. The chain crosses the membrane as a helical span at residues 103–123 (MVFGLSVLYFLFLVFLLFLNF). At 124 to 186 (EQVKSLMYWL…AMKALLIRSY (63 aa)) the chain is on the lumenal side. Residues 187–207 (GLCWTISITWELTELFFMHLL) form a helical membrane-spanning segment. Over 208 to 216 (PNFAECWWD) the chain is Cytoplasmic. The chain crosses the membrane as a helical span at residues 217–237 (QVILDILLCNGGGIWLGMVVC). The Lumenal portion of the chain corresponds to 238–286 (RFLEMRTYHWASFKDIHTTTGKIKRAVLQFTPASWTYVRWFDPKSSFQR). Residues 287–307 (VAGIYLFMIIWQLTELNTFFL) form a helical membrane-spanning segment. The Cytoplasmic segment spans residues 308–319 (KHIFVFQASHPL). The chain crosses the membrane as a helical span at residues 320 to 342 (SWGRILFIGCITAPTVRQYYAYL). Topologically, residues 343–355 (TDTQCKRVGTQCW) are lumenal. The chain crosses the membrane as a helical span at residues 356-376 (VFGVIGFLEAIVCIKFGQDLF). At 377–383 (SKTQILY) the chain is on the cytoplasmic side. A helical transmembrane segment spans residues 384–404 (VMLWLLCVAFTTFLCLYGMVW). Topologically, residues 405-473 (YAEHYGHREK…SKVTNGVGKK (69 aa)) are lumenal. Ser417, Ser425, Ser442, and Ser454 each carry phosphoserine. Residues 428–473 (ISWHHGKGSKGSEDSPPKHSSNHESHSSRRRNRHSKSKVTNGVGKK) form a disordered region. A compositionally biased stretch (basic and acidic residues) spans 437-454 (KGSEDSPPKHSSNHESHS). The segment covering 455–464 (SRRRNRHSKS) has biased composition (basic residues).

The protein belongs to the phosphatidyl serine synthase family. In terms of tissue distribution, expressed in kidney, testis, lung, skeletal muscle, liver brain, heart and spleen with highest expression in testis, liver, heart and brain.

Its subcellular location is the endoplasmic reticulum membrane. It catalyses the reaction a 1,2-diacyl-sn-glycero-3-phosphoethanolamine + L-serine = a 1,2-diacyl-sn-glycero-3-phospho-L-serine + ethanolamine. The enzyme catalyses a 1,2-diacyl-sn-glycero-3-phosphocholine + L-serine = a 1,2-diacyl-sn-glycero-3-phospho-L-serine + choline. It participates in phospholipid metabolism; phosphatidylserine biosynthesis. With respect to regulation, potently inhibited by choline in the mitochondria-associated membrane (MAM). Very little inhibition by choline in the endoplasmic reticulum (ER) per se. Catalyzes a base-exchange reaction in which the polar head group of phosphatidylethanolamine (PE) or phosphatidylcholine (PC) is replaced by L-serine. Catalyzes mainly the conversion of phosphatidylcholine. Also converts, in vitro and to a lesser extent, phosphatidylethanolamine. The chain is Phosphatidylserine synthase 1 (Ptdss1) from Mus musculus (Mouse).